The sequence spans 323 residues: Cobalamin biosynthesis protein CobD (323 aa).

Helical transmembrane passes span 52–72, 73–93, 154–174, 214–234, and 294–314; these read IAGV…TWLM, VWGS…LLSS, DGII…GMAF, ALLM…AASI, and IRLM…TAAL.

It belongs to the CobD/CbiB family.

It localises to the cell membrane. It participates in cofactor biosynthesis; adenosylcobalamin biosynthesis. Functionally, converts cobyric acid to cobinamide by the addition of aminopropanol on the F carboxylic group. The chain is Cobalamin biosynthesis protein CobD from Pelobacter propionicus (strain DSM 2379 / NBRC 103807 / OttBd1).